The primary structure comprises 236 residues: Ubiquinone biosynthesis O-methyltransferase (236 aa).

S-adenosyl-L-methionine is bound by residues Arg36, Gly56, Asp77, and Met125.

This sequence belongs to the methyltransferase superfamily. UbiG/COQ3 family.

It carries out the reaction a 3-demethylubiquinol + S-adenosyl-L-methionine = a ubiquinol + S-adenosyl-L-homocysteine + H(+). It catalyses the reaction a 3-(all-trans-polyprenyl)benzene-1,2-diol + S-adenosyl-L-methionine = a 2-methoxy-6-(all-trans-polyprenyl)phenol + S-adenosyl-L-homocysteine + H(+). It participates in cofactor biosynthesis; ubiquinone biosynthesis. In terms of biological role, O-methyltransferase that catalyzes the 2 O-methylation steps in the ubiquinone biosynthetic pathway. This is Ubiquinone biosynthesis O-methyltransferase from Haemophilus ducreyi (strain 35000HP / ATCC 700724).